The following is a 65-amino-acid chain: Ovary maturating parsin (65 aa).

Over residues 17–28 (PAAPAVAPAAPA) the composition is skewed to low complexity. The tract at residues 17 to 36 (PAAPAVAPAAPASWPHQQRR) is disordered.

In terms of assembly, monomer.

Functionally, neurohormone that anticipates ovarian maturation. Acts as a true gonadotropin and stimulates vitellogenin biosynthesis. This Locusta migratoria (Migratory locust) protein is Ovary maturating parsin.